The chain runs to 352 residues: 3'(2'),5'-bisphosphate nucleotidase (352 aa).

The active-site Proton acceptor is Asp45. 4 residues coordinate Mg(2+): Glu68, Asp133, Ile135, and Asp136. The active-site Proton acceptor is the Thr138. Residues Thr138, His240, Ser264, Lys267, Arg281, and Asp294 each coordinate adenosine 3',5'-bisphosphate. His240, Ser264, Lys267, Arg281, and Asp294 together coordinate AMP. Asp294 provides a ligand contact to Mg(2+).

It belongs to the inositol monophosphatase superfamily. Mg(2+) serves as cofactor.

The enzyme catalyses 3'-phosphoadenylyl sulfate + H2O = adenosine 5'-phosphosulfate + phosphate. It catalyses the reaction adenosine 3',5'-bisphosphate + H2O = AMP + phosphate. It carries out the reaction adenosine 2',5'-bisphosphate + H2O = AMP + phosphate. In terms of biological role, phosphatase that converts adenosine 3'-phosphate 5'-phosphosulfate (PAPS) to adenosine 5'-phosphosulfate (APS) and 3'(2')-phosphoadenosine 5'-phosphate (PAP) to AMP. May regulate the flux of sulfur in the sulfur-activation pathway by converting PAPS to APS. Involved in osmoadaptation. The protein is 3'(2'),5'-bisphosphate nucleotidase of Emericella nidulans (strain FGSC A4 / ATCC 38163 / CBS 112.46 / NRRL 194 / M139) (Aspergillus nidulans).